Consider the following 206-residue polypeptide: Ras-related protein Ral-B (206 aa).

Residue 21–29 (GSGGVGKSA) coordinates GTP. The Effector region signature appears at 43–51 (YEPTKADSY). Residues 68-72 (DTAGQ), 128-131 (NKSD), and 158-160 (SAK) contribute to the GTP site. The disordered stretch occupies residues 181 to 206 (MSENKDKNGRKSSKSKKSFKERCCLL). A Cysteine methyl ester modification is found at Cys-203. Cys-203 carries S-geranylgeranyl cysteine lipidation. The propeptide at 204 to 206 (CLL) is removed in mature form.

It belongs to the small GTPase superfamily. Ras family. As to quaternary structure, interacts with EXOC2/Sec5 and EXOC8/Exo84. Interacts (via effector domain) with RALBP1. Prenylation is essential for membrane localization. In terms of processing, the farnesylated form confers resistance to the proapoptotic and anti-anchorage-dependent growth effects of some geranylgeranyltransferase I inhibitors.

It localises to the cell membrane. The protein localises to the midbody. The enzyme catalyses GTP + H2O = GDP + phosphate + H(+). Alternates between an inactive form bound to GDP and an active form bound to GTP. Activated by a guanine nucleotide-exchange factor (GEF) and inactivated by a GTPase-activating protein (GAP). Functionally, multifunctional GTPase involved in a variety of cellular processes including gene expression, cell migration, cell proliferation, oncogenic transformation and membrane trafficking. Accomplishes its multiple functions by interacting with distinct downstream effectors. Acts as a GTP sensor for GTP-dependent exocytosis of dense core vesicles. Required both to stabilize the assembly of the exocyst complex and to localize functional exocyst complexes to the leading edge of migrating cells. Required for suppression of apoptosis. In late stages of cytokinesis, upon completion of the bridge formation between dividing cells, mediates exocyst recruitment to the midbody to drive abscission. Involved in ligand-dependent receptor mediated endocytosis of the EGF and insulin receptors. This Mus musculus (Mouse) protein is Ras-related protein Ral-B (Ralb).